Here is a 587-residue protein sequence, read N- to C-terminus: 5-aminolevulinate synthase, erythroid-specific, mitochondrial (587 aa).

Residues 1–49 (MVTAAMLLQRCPVLIRSPTGLLGKMIKTHQFLFGIGRCPILATQGPSFS) constitute a mitochondrion transit peptide. Arg163 is a binding site for succinyl-CoA. Pyridoxal 5'-phosphate is bound by residues Cys258 and Phe259. The succinyl-CoA site is built by Ser280 and Lys299. Pyridoxal 5'-phosphate contacts are provided by Ser332, His360, and Thr388. Residue Lys391 is part of the active site. Lys391 is modified (N6-(pyridoxal phosphate)lysine). The pyridoxal 5'-phosphate site is built by Thr420 and Thr421. A succinyl-CoA-binding site is contributed by Thr508.

This sequence belongs to the class-II pyridoxal-phosphate-dependent aminotransferase family. In terms of assembly, homodimer. Interacts with SUCLA2. The cofactor is pyridoxal 5'-phosphate.

The protein resides in the mitochondrion inner membrane. The catalysed reaction is succinyl-CoA + glycine + H(+) = 5-aminolevulinate + CO2 + CoA. It functions in the pathway porphyrin-containing compound metabolism; protoporphyrin-IX biosynthesis; 5-aminolevulinate from glycine: step 1/1. In terms of biological role, catalyzes the pyridoxal 5'-phosphate (PLP)-dependent condensation of succinyl-CoA and glycine to form aminolevulinic acid (ALA), with CoA and CO2 as by-products. Contributes significantly to heme formation during erythropoiesis. This Bos taurus (Bovine) protein is 5-aminolevulinate synthase, erythroid-specific, mitochondrial (ALAS2).